The following is a 158-amino-acid chain: Transcription elongation factor GreA (158 aa).

It belongs to the GreA/GreB family.

Necessary for efficient RNA polymerase transcription elongation past template-encoded arresting sites. The arresting sites in DNA have the property of trapping a certain fraction of elongating RNA polymerases that pass through, resulting in locked ternary complexes. Cleavage of the nascent transcript by cleavage factors such as GreA or GreB allows the resumption of elongation from the new 3'terminus. GreA releases sequences of 2 to 3 nucleotides. This chain is Transcription elongation factor GreA, found in Psychrobacter arcticus (strain DSM 17307 / VKM B-2377 / 273-4).